The following is a 448-amino-acid chain: Nicotinate phosphoribosyltransferase pncB1 (448 aa).

A disordered region spans residues 1-21 (MGPPPAARRREGEPDNQDPAG). Position 212 is a phosphohistidine (His-212). The interval 353 to 372 (RSSYKESPGGRKEALRRSRA) is disordered.

The protein belongs to the NAPRTase family. In terms of processing, transiently phosphorylated on a His residue during the reaction cycle. Phosphorylation strongly increases the affinity for substrates and increases the rate of nicotinate D-ribonucleotide production. Dephosphorylation regenerates the low-affinity form of the enzyme, leading to product release.

It catalyses the reaction nicotinate + 5-phospho-alpha-D-ribose 1-diphosphate + ATP + H2O = nicotinate beta-D-ribonucleotide + ADP + phosphate + diphosphate. It functions in the pathway cofactor biosynthesis; NAD(+) biosynthesis; nicotinate D-ribonucleotide from nicotinate: step 1/1. Functionally, involved in the Preiss-Handler pathway, which is a recycling route that permits the salvage of free nicotinamide (NM) and nicotinic acid (Na) involved in the NAD biosynthesis. Catalyzes the synthesis of beta-nicotinate D-ribonucleotide from nicotinate and 5-phospho-D-ribose 1-phosphate at the expense of ATP. It is not able to use nicotinamide. PncB1 contributes to basal NAD level. This chain is Nicotinate phosphoribosyltransferase pncB1 (pncB1), found in Mycobacterium tuberculosis (strain CDC 1551 / Oshkosh).